We begin with the raw amino-acid sequence, 291 residues long: Undecaprenyl-diphosphatase (291 aa).

The next 8 membrane-spanning stretches (helical) occupy residues 1–21, 48–68, 100–120, 124–144, 160–180, 201–221, 230–250, and 270–290; these read MIIIEFIKGLILGIVEGLTEF, SAFTFKVVIQLGSVFAAAWVF, LHVLVGMIPAGILGVLFDDFI, LFSVPTVMIGLFLGAIYMIIA, INYVQAFVIGISQAVAMWPGF, SDFTFIMAVPIMLAASALSLV, AHIPFYLIGFLAAFIVGLIAI, and IVLVIIIAILYFGFGIGQGIS.

Belongs to the UppP family.

The protein resides in the cell membrane. It catalyses the reaction di-trans,octa-cis-undecaprenyl diphosphate + H2O = di-trans,octa-cis-undecaprenyl phosphate + phosphate + H(+). In terms of biological role, catalyzes the dephosphorylation of undecaprenyl diphosphate (UPP). Confers resistance to bacitracin. This is Undecaprenyl-diphosphatase from Staphylococcus haemolyticus (strain JCSC1435).